The primary structure comprises 135 residues: MNSCKRFPRSARICLRSEYYVAFEQGRRYSSVLLRLHHLPTSGPVRLGLVVSRRVDIRAVNRNRIKRALREVMRQIAYKLVPGDYVVVVRQTAKDVSNAELSVALLSLLRRIGALPLAPIDNAMLPFFERNCSRK.

It belongs to the RnpA family. Consists of a catalytic RNA component (M1 or rnpB) and a protein subunit.

The catalysed reaction is Endonucleolytic cleavage of RNA, removing 5'-extranucleotides from tRNA precursor.. In terms of biological role, RNaseP catalyzes the removal of the 5'-leader sequence from pre-tRNA to produce the mature 5'-terminus. It can also cleave other RNA substrates such as 4.5S RNA. The protein component plays an auxiliary but essential role in vivo by binding to the 5'-leader sequence and broadening the substrate specificity of the ribozyme. The protein is Ribonuclease P protein component of Xylella fastidiosa (strain 9a5c).